We begin with the raw amino-acid sequence, 338 residues long: Glyceraldehyde-3-phosphate dehydrogenase (338 aa).

NAD(+) contacts are provided by residues 12–13, Asp-34, and Arg-79; that span reads RI. D-glyceraldehyde 3-phosphate is bound by residues 150 to 152, Thr-181, 210 to 211, and Arg-233; these read SCT and TG. Catalysis depends on Cys-151, which acts as the Nucleophile. An NAD(+)-binding site is contributed by Asn-315.

This sequence belongs to the glyceraldehyde-3-phosphate dehydrogenase family. As to quaternary structure, homotetramer.

The protein resides in the cytoplasm. The catalysed reaction is D-glyceraldehyde 3-phosphate + phosphate + NAD(+) = (2R)-3-phospho-glyceroyl phosphate + NADH + H(+). It functions in the pathway carbohydrate degradation; glycolysis; pyruvate from D-glyceraldehyde 3-phosphate: step 1/5. The protein is Glyceraldehyde-3-phosphate dehydrogenase (gpd1) of Hypocrea atroviridis (Trichoderma atroviride).